A 720-amino-acid polypeptide reads, in one-letter code: Polyribonucleotide nucleotidyltransferase (720 aa).

Residues Asp484 and Asp490 each coordinate Mg(2+). One can recognise a KH domain in the interval 551 to 610; sequence PRMYKINIDPSKIGSVIGSGGKTIRSIIEQTNTTVDIENDGTVVIGATDEASAKKAIKII. The 69-residue stretch at 620–688 folds into the S1 motif domain; it reads GSIYTGKVTR…NQGRVNLSHR (69 aa). Positions 697 to 720 are disordered; sequence PISRNRDSQPRRPGPFRPSDRSNS.

It belongs to the polyribonucleotide nucleotidyltransferase family. The cofactor is Mg(2+).

Its subcellular location is the cytoplasm. It catalyses the reaction RNA(n+1) + phosphate = RNA(n) + a ribonucleoside 5'-diphosphate. Involved in mRNA degradation. Catalyzes the phosphorolysis of single-stranded polyribonucleotides processively in the 3'- to 5'-direction. This chain is Polyribonucleotide nucleotidyltransferase, found in Dehalococcoides mccartyi (strain CBDB1).